We begin with the raw amino-acid sequence, 130 residues long: Fluoride-specific ion channel FluC (130 aa).

4 helical membrane-spanning segments follow: residues 3-23 (FVFLWAALGGAIGSSLRYFVG), 39-59 (GTFSVNIIGCFVIGFMGHLAV), 67-87 (FGIFFITGVLGGFTTFSSYGL), and 102-122 (ISYVLGTNILGFIGVAIGWFL). 2 residues coordinate Na(+): glycine 77 and threonine 80.

This sequence belongs to the fluoride channel Fluc/FEX (TC 1.A.43) family.

The protein resides in the cell inner membrane. It catalyses the reaction fluoride(in) = fluoride(out). Na(+) is not transported, but it plays an essential structural role and its presence is essential for fluoride channel function. Functionally, fluoride-specific ion channel. Important for reducing fluoride concentration in the cell, thus reducing its toxicity. This chain is Fluoride-specific ion channel FluC, found in Helicobacter pylori (strain P12).